The following is an 859-amino-acid chain: Cadherin-related family member 1 (859 aa).

The N-terminal stretch at 1-21 is a signal peptide; that stretch reads MRRGPRVALVLGLLRIYLAQA. Topologically, residues 22–701 are extracellular; the sequence is NFAPHFFDNG…LIQTKDNPMK (680 aa). Cadherin domains follow at residues 36-135, 136-247, 248-354, 360-473, 474-577, and 569-691; these read NGNM…APRF, IQEP…APIF, VGTP…PPTF, PQNK…VPKF, TSHY…YPQF, and DVND…MAAF. N-linked (GlcNAc...) asparagine glycosylation is found at Asn-58 and Asn-89. An N-linked (GlcNAc...) asparagine glycan is attached at Asn-288. A helical membrane pass occupies residues 702-722; sequence AVGVLAGVMAIVVAITVLIST. The Cytoplasmic segment spans residues 723-859; that stretch reads ATFWRNKKSN…KKSLDNKAYI (137 aa). The interval 793–838 is disordered; sequence PALPPPPKMASSMVAQQTVPTVSGSLTPQPSPQLPTPKTLGGPVQS. The segment covering 805 to 816 has biased composition (polar residues); it reads MVAQQTVPTVSG.

As to quaternary structure, interacts with PROM1. Post-translationally, undergoes proteolytic cleavage; produces a soluble 95 kDa N-terminal fragment and a 25 kDa cell-associated C-terminal fragment. In terms of tissue distribution, expressed in cone and rod photoreceptor cells (at protein level). Expressed in photoreceptor cells of the outer nuclear layer of the retina. Expressed in mitral and tufted cells in the olfactory bulb.

It localises to the cell membrane. In terms of biological role, potential calcium-dependent cell-adhesion protein. May be required for the structural integrity of the outer segment (OS) of photoreceptor cells. This chain is Cadherin-related family member 1 (Cdhr1), found in Mus musculus (Mouse).